The sequence spans 258 residues: Dehydrodolichyl diphosphate synthase complex subunit nus1 (258 aa).

The helical transmembrane segment at 5–21 threads the bilayer; sequence IFFYLALWVIQSVYGAW.

Belongs to the UPP synthase family. In terms of assembly, forms an active dehydrodolichyl diphosphate synthase complex with SPAC4D7.04c. Mg(2+) serves as cofactor.

It is found in the endoplasmic reticulum membrane. The catalysed reaction is n isopentenyl diphosphate + (2E,6E)-farnesyl diphosphate = a di-trans,poly-cis-polyprenyl diphosphate + n diphosphate. It functions in the pathway protein modification; protein glycosylation. In terms of biological role, with SPAC4D7.04c, forms the dehydrodolichyl diphosphate synthase (DDS) complex, an essential component of the dolichol monophosphate (Dol-P) biosynthetic machinery. Adds multiple copies of isopentenyl pyrophosphate (IPP) to farnesyl pyrophosphate (FPP) to produce dehydrodolichyl diphosphate (Dedol-PP), a precursor of dolichol which is utilized as a sugar carrier in protein glycosylation in the endoplasmic reticulum (ER). In Schizosaccharomyces pombe (strain 972 / ATCC 24843) (Fission yeast), this protein is Dehydrodolichyl diphosphate synthase complex subunit nus1 (nus1).